The sequence spans 946 residues: Bifunctional glutamine synthetase adenylyltransferase/adenylyl-removing enzyme (946 aa).

The adenylyl removase stretch occupies residues 1 to 440; the sequence is MKPLSSPLQQ…VFNELIGDDE (440 aa). Residues 449-946 form an adenylyl transferase region; it reads SEQWRELWQD…ASWQKWLVEE (498 aa).

This sequence belongs to the GlnE family. Requires Mg(2+) as cofactor.

The catalysed reaction is [glutamine synthetase]-O(4)-(5'-adenylyl)-L-tyrosine + phosphate = [glutamine synthetase]-L-tyrosine + ADP. It carries out the reaction [glutamine synthetase]-L-tyrosine + ATP = [glutamine synthetase]-O(4)-(5'-adenylyl)-L-tyrosine + diphosphate. In terms of biological role, involved in the regulation of glutamine synthetase GlnA, a key enzyme in the process to assimilate ammonia. When cellular nitrogen levels are high, the C-terminal adenylyl transferase (AT) inactivates GlnA by covalent transfer of an adenylyl group from ATP to specific tyrosine residue of GlnA, thus reducing its activity. Conversely, when nitrogen levels are low, the N-terminal adenylyl removase (AR) activates GlnA by removing the adenylyl group by phosphorolysis, increasing its activity. The regulatory region of GlnE binds the signal transduction protein PII (GlnB) which indicates the nitrogen status of the cell. The protein is Bifunctional glutamine synthetase adenylyltransferase/adenylyl-removing enzyme of Shigella boydii serotype 18 (strain CDC 3083-94 / BS512).